The chain runs to 197 residues: Fucoxanthin-chlorophyll a-c binding protein D, chloroplastic (197 aa).

The N-terminal 31 residues, 1 to 31, are a transit peptide targeting the chloroplast; that stretch reads MKTAVIASLIAGAAAFAPAKNAARTSVATNM. 3 helical membrane-spanning segments follow: residues 73–94, 114–133, and 174–196; these read ISMLAVVGYLVQEAGVRLPGTI, PAGGLVQLLFFIGVLESSVM, and GRAAQMGILALMVHEQLGVSLLP.

The protein belongs to the fucoxanthin chlorophyll protein family. As to quaternary structure, the LHC complex of chromophytic algae is composed of fucoxanthin, chlorophyll A and C bound non-covalently by fucoxanthin chlorophyll proteins (FCPs). The ratio of the pigments in LHC; fucoxanthin: chlorophyll C: chlorophyll A; (0.6-1): (0.1-0.3): (1).

The protein localises to the plastid. It is found in the chloroplast thylakoid membrane. The light-harvesting complex (LHC) functions as a light receptor, it captures and delivers excitation energy to photosystems with which it is closely associated. Energy is transferred from the carotenoid and chlorophyll C (or B) to chlorophyll A and the photosynthetic reaction centers where it is used to synthesize ATP and reducing power. The sequence is that of Fucoxanthin-chlorophyll a-c binding protein D, chloroplastic (FCPD) from Phaeodactylum tricornutum (Diatom).